Reading from the N-terminus, the 242-residue chain is Ubiquinone biosynthesis O-methyltransferase (242 aa).

Positions 44, 64, 85, and 129 each coordinate S-adenosyl-L-methionine.

Belongs to the methyltransferase superfamily. UbiG/COQ3 family.

It carries out the reaction a 3-demethylubiquinol + S-adenosyl-L-methionine = a ubiquinol + S-adenosyl-L-homocysteine + H(+). The enzyme catalyses a 3-(all-trans-polyprenyl)benzene-1,2-diol + S-adenosyl-L-methionine = a 2-methoxy-6-(all-trans-polyprenyl)phenol + S-adenosyl-L-homocysteine + H(+). Its pathway is cofactor biosynthesis; ubiquinone biosynthesis. Its function is as follows. O-methyltransferase that catalyzes the 2 O-methylation steps in the ubiquinone biosynthetic pathway. This is Ubiquinone biosynthesis O-methyltransferase from Salmonella paratyphi A (strain ATCC 9150 / SARB42).